A 210-amino-acid polypeptide reads, in one-letter code: dITP/XTP pyrophosphatase (210 aa).

16-21 (SNNKGK) lines the substrate pocket. Asp79 (proton acceptor) is an active-site residue. Asp79 contacts Mg(2+). Substrate contacts are provided by residues Ser80, 166–169 (FGYD), Lys189, and 194–195 (HR).

This sequence belongs to the HAM1 NTPase family. In terms of assembly, homodimer. Mg(2+) is required as a cofactor.

It carries out the reaction XTP + H2O = XMP + diphosphate + H(+). It catalyses the reaction dITP + H2O = dIMP + diphosphate + H(+). The enzyme catalyses ITP + H2O = IMP + diphosphate + H(+). In terms of biological role, pyrophosphatase that catalyzes the hydrolysis of nucleoside triphosphates to their monophosphate derivatives, with a high preference for the non-canonical purine nucleotides XTP (xanthosine triphosphate), dITP (deoxyinosine triphosphate) and ITP. Seems to function as a house-cleaning enzyme that removes non-canonical purine nucleotides from the nucleotide pool, thus preventing their incorporation into DNA/RNA and avoiding chromosomal lesions. The polypeptide is dITP/XTP pyrophosphatase (Acinetobacter baylyi (strain ATCC 33305 / BD413 / ADP1)).